Reading from the N-terminus, the 136-residue chain is MNCDALLHHSAIPEDFLHIFLLLQKISVSLPLSLSQSVCLFYSISLCVSLLLHISLCVSVYVSLSLSSFPCFSLTHTHTHSQLSKDTSVLTFTFCFKQHTHFTLNYTSHAHELSAPSVHPTCVFTFKAAPSPRPAT.

A helical membrane pass occupies residues 40–62 (LFYSISLCVSLLLHISLCVSVYV).

Its subcellular location is the membrane. This is an uncharacterized protein from Homo sapiens (Human).